Reading from the N-terminus, the 1073-residue chain is Self-sufficient cytochrome P450 monooxygenase CYP505AG1 (1073 aa).

Residue Cys409 coordinates heme. In terms of domain architecture, Flavodoxin-like spans 501–644 (VTILYGSNSG…DLENWEDEHL (144 aa)). FMN contacts are provided by residues 507-511 (SNSGT) and 588-620 (VFAC…HRVA). In terms of domain architecture, FAD-binding FR-type spans 680-909 (HNAVECIVSE…RPCKKQFHLP (230 aa)).

This sequence in the N-terminal section; belongs to the cytochrome P450 family. The cofactor is FAD. FMN is required as a cofactor. Heme serves as cofactor.

The enzyme catalyses 2 oxidized [cytochrome P450] + NADPH = 2 reduced [cytochrome P450] + NADP(+) + H(+). The catalysed reaction is an organic molecule + reduced [NADPH--hemoprotein reductase] + O2 = an alcohol + oxidized [NADPH--hemoprotein reductase] + H2O + H(+). It catalyses the reaction dodecanoate + reduced [NADPH--hemoprotein reductase] + O2 = 10-hydroxydodecanoate + oxidized [NADPH--hemoprotein reductase] + H2O + H(+). It carries out the reaction tetradecanoate + reduced [NADPH--hemoprotein reductase] + O2 = 12-hydroxytetradecanoate + oxidized [NADPH--hemoprotein reductase] + H2O + H(+). Self-sufficient cytochrome P450 monooxygenase that catalyzes the regioselective in-chain hydroxylation of alkanes, fatty alcohols, and fatty acids, giving sub-terminal hydroxylation by acting preferentially on the omega-2 position. Prefers fatty acids as substrates, since it hydroxylates the small amounts of dodecanoic acid formed in the presence of an excess of 1-dodecanol. In Oidiodendron maius (strain Zn), this protein is Self-sufficient cytochrome P450 monooxygenase CYP505AG1.